The sequence spans 183 residues: Translation initiation factor IF-3 (183 aa).

This sequence belongs to the IF-3 family. In terms of assembly, monomer.

It localises to the cytoplasm. Functionally, IF-3 binds to the 30S ribosomal subunit and shifts the equilibrium between 70S ribosomes and their 50S and 30S subunits in favor of the free subunits, thus enhancing the availability of 30S subunits on which protein synthesis initiation begins. The chain is Translation initiation factor IF-3 from Pseudomonas fluorescens (strain SBW25).